The primary structure comprises 420 residues: F-box protein At5g07610 (420 aa).

Residues 1-25 are disordered; that stretch reads MSSCSRTRTKAPRSARSRRNGGFSS. A compositionally biased stretch (basic residues) spans 7–19; that stretch reads TRTKAPRSARSRR. Positions 27–77 constitute an F-box domain; it reads SATIVADIDDVLIQILSFLPIKTLLRFKRVSKRWLSLITNPVFSNRVIKSN.

This is F-box protein At5g07610 from Arabidopsis thaliana (Mouse-ear cress).